A 399-amino-acid polypeptide reads, in one-letter code: Presilphiperfolan-8-beta-ol synthase (399 aa).

Positions 1–60 are disordered; it reads MAIPALEPQLHDADTSSNNMSSNSTDSGYDTNSTTPLEKSEKPNTQELKQQQLDPKRPPF. The span at 15-27 shows a compositional bias: low complexity; that stretch reads TSSNNMSSNSTDS. The segment covering 28–37 has biased composition (polar residues); sequence GYDTNSTTPL. Positions 141, 285, and 289 each coordinate Mg(2+). The DDXXD motif motif lies at 141–145; the sequence is DDQFD. Arginine 373 and tyrosine 374 together coordinate (2E,6E)-farnesyl diphosphate.

It belongs to the terpene synthase family. Mg(2+) serves as cofactor.

The catalysed reaction is (2E,6E)-farnesyl diphosphate + H2O = presilphiperfolan-8beta-ol + diphosphate. Its pathway is secondary metabolite biosynthesis. In terms of biological role, presilphiperfolan-8-beta-ol synthase; part of the gene cluster that mediates the biosynthesis of botrydial. Botrydial is necessary for colonization of plant tissue by the T4 strain. It is a strain-dependent virulence factor since highly aggressive strains like SAS56 or B05 still retain substantial virulence when botrydial synthesis is impaired, since they produce also botcinic acid. The first step of botrydial biosynthesis is performed by the sesquiterpene synthase BOT2 which catalyzes the cyclization of farnesyl diphosphate (FPP) to presilphiperfolan-8-beta-ol (PSP). The cytochrome P450 monooxygenase BOT4 then catalyzes the hydroxylation at C-4 to give a probotryane intermediate. Acetylation of the hydroxyl at C-4 is carried out by the acetyltransferase BOT5, followed by the combined action of the P450 monooxygenases BOT3 and BOT1, to yield finally the glycol, via the regio- and stereospecific hydroxylations at C-10 and C-15 of the probotryane intermediates, respectively. The cleavage of the C10-C15 bond of probotryane skeleton is an intriguing and chemically important reaction, which could be mediated by some of the monooxygenases or by a combination of them. It is possible that either BOT3 or BOT1 would oxidize either the 10- or the 15-hydroxy group to the hydroperoxide derivative, which would then undergo heterolytic fragmentation to give the dialdehyde botrydial. Finally, the dehydrogenase BOT7 might be involved in the conversion of botrydial to dihydrobotrydial. The chain is Presilphiperfolan-8-beta-ol synthase (BOT2) from Botryotinia fuckeliana (Noble rot fungus).